The sequence spans 693 residues: eEF1A lysine and N-terminal methyltransferase (693 aa).

The protein belongs to the methyltransferase superfamily.

It catalyses the reaction L-lysyl-[protein] + S-adenosyl-L-methionine = N(6)-methyl-L-lysyl-[protein] + S-adenosyl-L-homocysteine + H(+). The enzyme catalyses N(6)-methyl-L-lysyl-[protein] + S-adenosyl-L-methionine = N(6),N(6)-dimethyl-L-lysyl-[protein] + S-adenosyl-L-homocysteine + H(+). The catalysed reaction is N-terminal glycyl-L-lysyl-L-glutamyl-[protein] + 3 S-adenosyl-L-methionine = N-terminal N,N,N-trimethyl-glycyl-L-lysyl-L-glutamyl-[protein] + 3 S-adenosyl-L-homocysteine + 3 H(+). Its function is as follows. Dual methyltransferase that catalyzes methylation of elongation factor 1-alpha (eef1a1 and eef1a2) at two different positions, and is therefore involved in the regulation of mRNA translation. Via its C-terminus, methylates the N-terminus of eef1a1 and eef1a2. Via its N-terminus dimethylates lysine residues of eef1a1 and eef1a2. In Xenopus laevis (African clawed frog), this protein is eEF1A lysine and N-terminal methyltransferase (mettl13).